The sequence spans 158 residues: SsrA-binding protein (158 aa).

The protein belongs to the SmpB family.

The protein localises to the cytoplasm. Required for rescue of stalled ribosomes mediated by trans-translation. Binds to transfer-messenger RNA (tmRNA), required for stable association of tmRNA with ribosomes. tmRNA and SmpB together mimic tRNA shape, replacing the anticodon stem-loop with SmpB. tmRNA is encoded by the ssrA gene; the 2 termini fold to resemble tRNA(Ala) and it encodes a 'tag peptide', a short internal open reading frame. During trans-translation Ala-aminoacylated tmRNA acts like a tRNA, entering the A-site of stalled ribosomes, displacing the stalled mRNA. The ribosome then switches to translate the ORF on the tmRNA; the nascent peptide is terminated with the 'tag peptide' encoded by the tmRNA and targeted for degradation. The ribosome is freed to recommence translation, which seems to be the essential function of trans-translation. In Roseiflexus sp. (strain RS-1), this protein is SsrA-binding protein.